Reading from the N-terminus, the 327-residue chain is Ribonucleoside-diphosphate reductase small chain (327 aa).

Positions 70, 101, and 104 each coordinate Fe cation. Tyr-108 is a catalytic residue. Glu-164, Glu-198, and His-201 together coordinate Fe cation.

It belongs to the ribonucleoside diphosphate reductase small chain family. Heterotetramer composed of a homodimer of the large subunit (R1) and a homodimer of the small subunit (R2). Larger multisubunit protein complex are also active, composed of (R1)n(R2)n. The cofactor is Fe cation.

It carries out the reaction a 2'-deoxyribonucleoside 5'-diphosphate + [thioredoxin]-disulfide + H2O = a ribonucleoside 5'-diphosphate + [thioredoxin]-dithiol. Its function is as follows. Ribonucleoside-diphosphate reductase holoenzyme provides the precursors necessary for viral DNA synthesis. Allows virus growth in non-dividing cells. Catalyzes the biosynthesis of deoxyribonucleotides from the corresponding ribonucleotides. The protein is Ribonucleoside-diphosphate reductase small chain of African swine fever virus (isolate Tick/South Africa/Pretoriuskop Pr4/1996) (ASFV).